The sequence spans 401 residues: Succinyl-diaminopimelate desuccinylase (401 aa).

H82 contacts Zn(2+). Residue D84 is part of the active site. D115 serves as a coordination point for Zn(2+). Residue E149 is the Proton acceptor of the active site. E150, E178, and H364 together coordinate Zn(2+).

Belongs to the peptidase M20A family. DapE subfamily. As to quaternary structure, homodimer. It depends on Zn(2+) as a cofactor. Requires Co(2+) as cofactor.

The catalysed reaction is N-succinyl-(2S,6S)-2,6-diaminopimelate + H2O = (2S,6S)-2,6-diaminopimelate + succinate. It participates in amino-acid biosynthesis; L-lysine biosynthesis via DAP pathway; LL-2,6-diaminopimelate from (S)-tetrahydrodipicolinate (succinylase route): step 3/3. Catalyzes the hydrolysis of N-succinyl-L,L-diaminopimelic acid (SDAP), forming succinate and LL-2,6-diaminopimelate (DAP), an intermediate involved in the bacterial biosynthesis of lysine and meso-diaminopimelic acid, an essential component of bacterial cell walls. The polypeptide is Succinyl-diaminopimelate desuccinylase (Verminephrobacter eiseniae (strain EF01-2)).